The sequence spans 555 residues: Phosphomethylpyrimidine synthase (555 aa).

The disordered stretch occupies residues 78–104 (VRDRWGFDNGSAESTKGELSMSERKPR). Substrate is bound by residues Asn191, Met220, Tyr249, His285, 305-307 (SRG), 346-349 (DALR), and Glu385. Residue His389 participates in Zn(2+) binding. Tyr412 contacts substrate. His453 serves as a coordination point for Zn(2+). Residues Cys535, Cys538, and Cys543 each contribute to the [4Fe-4S] cluster site.

It belongs to the ThiC family. It depends on [4Fe-4S] cluster as a cofactor.

The enzyme catalyses 5-amino-1-(5-phospho-beta-D-ribosyl)imidazole + S-adenosyl-L-methionine = 4-amino-2-methyl-5-(phosphooxymethyl)pyrimidine + CO + 5'-deoxyadenosine + formate + L-methionine + 3 H(+). It participates in cofactor biosynthesis; thiamine diphosphate biosynthesis. Its function is as follows. Catalyzes the synthesis of the hydroxymethylpyrimidine phosphate (HMP-P) moiety of thiamine from aminoimidazole ribotide (AIR) in a radical S-adenosyl-L-methionine (SAM)-dependent reaction. In Chlorobaculum parvum (strain DSM 263 / NCIMB 8327) (Chlorobium vibrioforme subsp. thiosulfatophilum), this protein is Phosphomethylpyrimidine synthase.